The chain runs to 97 residues: Small ribosomal subunit protein bS6 (97 aa).

This sequence belongs to the bacterial ribosomal protein bS6 family.

In terms of biological role, binds together with bS18 to 16S ribosomal RNA. The polypeptide is Small ribosomal subunit protein bS6 (rpsF) (Lactococcus lactis subsp. lactis (strain IL1403) (Streptococcus lactis)).